Reading from the N-terminus, the 166-residue chain is Phosphopantetheine adenylyltransferase (166 aa).

Position 11 (Ser-11) interacts with substrate. ATP is bound by residues 11 to 12 (SF) and His-19. Substrate-binding residues include Lys-43, Ala-76, and Arg-90. ATP is bound by residues 91–93 (GLR), Glu-101, and 126–132 (LQPISSS).

The protein belongs to the bacterial CoaD family. Homohexamer. Requires Mg(2+) as cofactor.

Its subcellular location is the cytoplasm. It catalyses the reaction (R)-4'-phosphopantetheine + ATP + H(+) = 3'-dephospho-CoA + diphosphate. The protein operates within cofactor biosynthesis; coenzyme A biosynthesis; CoA from (R)-pantothenate: step 4/5. Its function is as follows. Reversibly transfers an adenylyl group from ATP to 4'-phosphopantetheine, yielding dephospho-CoA (dPCoA) and pyrophosphate. The polypeptide is Phosphopantetheine adenylyltransferase (Streptococcus equi subsp. zooepidemicus (strain MGCS10565)).